The chain runs to 410 residues: Na(+)/H(+) antiporter NhaA 1/4 (410 aa).

11 helical membrane passes run 16-36 (VGGS…NSPL), 55-75 (LNLS…FFIV), 95-115 (ALPI…FLAF), 125-145 (GGWG…LAVV), 156-176 (FLLT…AVAC), 178-198 (SGIN…FGYL), 215-235 (AWLL…ACGV), 275-295 (IALP…AGGF), 299-319 (AITW…IFGG), 340-360 (IAGI…IAEL), and 371-391 (AKGA…LLLG).

The protein belongs to the NhaA Na(+)/H(+) (TC 2.A.33) antiporter family.

The protein resides in the cell membrane. The enzyme catalyses Na(+)(in) + 2 H(+)(out) = Na(+)(out) + 2 H(+)(in). Na(+)/H(+) antiporter that extrudes sodium in exchange for external protons. The chain is Na(+)/H(+) antiporter NhaA 1/4 from Streptomyces coelicolor (strain ATCC BAA-471 / A3(2) / M145).